A 61-amino-acid chain; its full sequence is Conotoxin Cal14.6 (61 aa).

Residues M1–A21 form the signal peptide. Residues G22–G38 constitute a propeptide that is removed on maturation. P57 carries the 4-hydroxyproline; partial modification. Position 60 is a proline amide (P60).

Contains 2 disulfide bonds. As to expression, expressed by the venom duct.

Its subcellular location is the secreted. Functionally, probable neurotoxin with unknown target. Possibly targets ion channels. The protein is Conotoxin Cal14.6 of Californiconus californicus (California cone).